The following is a 159-amino-acid chain: Putative 4-hydroxy-4-methyl-2-oxoglutarate aldolase (159 aa).

Substrate contacts are provided by residues 78-81 (GDVI) and Arg100. An a divalent metal cation-binding site is contributed by Asp101.

The protein belongs to the class II aldolase/RraA-like family. Homotrimer. It depends on a divalent metal cation as a cofactor.

It carries out the reaction 4-hydroxy-4-methyl-2-oxoglutarate = 2 pyruvate. It catalyses the reaction oxaloacetate + H(+) = pyruvate + CO2. In terms of biological role, catalyzes the aldol cleavage of 4-hydroxy-4-methyl-2-oxoglutarate (HMG) into 2 molecules of pyruvate. Also contains a secondary oxaloacetate (OAA) decarboxylase activity due to the common pyruvate enolate transition state formed following C-C bond cleavage in the retro-aldol and decarboxylation reactions. This Mycobacterium sp. (strain JLS) protein is Putative 4-hydroxy-4-methyl-2-oxoglutarate aldolase.